A 1227-amino-acid polypeptide reads, in one-letter code: DNA-directed RNA polymerase subunit beta (1227 aa).

The protein belongs to the RNA polymerase beta chain family. The RNAP catalytic core consists of 2 alpha, 1 beta, 1 beta' and 1 omega subunit. When a sigma factor is associated with the core the holoenzyme is formed, which can initiate transcription.

It catalyses the reaction RNA(n) + a ribonucleoside 5'-triphosphate = RNA(n+1) + diphosphate. In terms of biological role, DNA-dependent RNA polymerase catalyzes the transcription of DNA into RNA using the four ribonucleoside triphosphates as substrates. The chain is DNA-directed RNA polymerase subunit beta from Chloroflexus aggregans (strain MD-66 / DSM 9485).